We begin with the raw amino-acid sequence, 283 residues long: Probable replication-associated protein repA1 (283 aa).

It belongs to the IncFII RepA family.

In terms of biological role, this protein is essential for plasmid replication; it is involved in copy control functions. The protein is Probable replication-associated protein repA1 (repA1) of Buchnera aphidicola subsp. Schizaphis graminum (strain Sg).